The sequence spans 321 residues: uncharacterized protein (321 aa).

Helical transmembrane passes span 10–28 (LWCSFGVFLIIIIIIEMSI), 41–63 (IALYSSCISMLTAILFDVLIWIY), 94–111 (NVAMWFFLFQLFSISMVH), 116–138 (LFYGTFLALVFRSSIIFFGVWLL), 143–165 (FLFYVLSIILLFTGIITILSNGV), 200–222 (NGVIVATPLFLVLILIELNDIIF), 237–259 (PFIIITSSFFSIIGLRSIYVILA), 266–283 (YIIKYGITLILIFISIKI), and 293–315 (IMLSSFFIVCILVACFIIEKFFF).

The protein belongs to the TerC family.

Its subcellular location is the cell membrane. This is an uncharacterized protein from Buchnera aphidicola subsp. Baizongia pistaciae (strain Bp).